Here is a 148-residue protein sequence, read N- to C-terminus: Hemoglobin subunit beta-2 (148 aa).

The 146-residue stretch at 3–148 (EWTDAERTAI…VVSALCRQYH (146 aa)) folds into the Globin domain. Positions 64 and 93 each coordinate heme b.

As to quaternary structure, heterotetramer of two alpha chains and two beta chains. Red blood cells.

Its function is as follows. Involved in oxygen transport from gills to the various peripheral tissues. The protein is Hemoglobin subunit beta-2 (ba2) of Danio rerio (Zebrafish).